The sequence spans 166 residues: Endoribonuclease YbeY (166 aa).

His111, His115, and His121 together coordinate Zn(2+). The tract at residues Glu140–Glu166 is disordered. The segment covering Asp154–Glu166 has biased composition (basic and acidic residues).

This sequence belongs to the endoribonuclease YbeY family. Requires Zn(2+) as cofactor.

The protein resides in the cytoplasm. Its function is as follows. Single strand-specific metallo-endoribonuclease involved in late-stage 70S ribosome quality control and in maturation of the 3' terminus of the 16S rRNA. The chain is Endoribonuclease YbeY from Pseudomonas syringae pv. syringae (strain B728a).